A 274-amino-acid polypeptide reads, in one-letter code: Glutamate--cysteine ligase regulatory subunit (274 aa).

A Phosphoserine modification is found at Ser59. Lys263 is subject to N6-acetyllysine.

The protein belongs to the aldo/keto reductase family. Glutamate--cysteine ligase light chain subfamily. As to quaternary structure, heterodimer of a catalytic heavy chain and a regulatory light chain.

The protein operates within sulfur metabolism; glutathione biosynthesis; glutathione from L-cysteine and L-glutamate: step 1/2. The sequence is that of Glutamate--cysteine ligase regulatory subunit (Gclm) from Mus musculus (Mouse).